A 276-amino-acid chain; its full sequence is Anamorsin homolog (276 aa).

Residues 1–152 (MEPYVVDNLN…TRGSSIKLPW (152 aa)) form an N-terminal SAM-like domain region. A linker region spans residues 152 to 189 (WAHSDIEAAWENVDNETSYDVDKNLINTNSLLQKSDYV). Cys195, Cys211, Cys214, and Cys216 together coordinate [2Fe-2S] cluster. The fe-S binding site A stretch occupies residues 195–216 (CGQEFAKNSIGKRKRACKNCTC). 4 residues coordinate [4Fe-4S] cluster: Cys237, Cys240, Cys248, and Cys251. 2 consecutive short sequence motifs (cx2C motif) follow at residues 237–240 (CGNC) and 248–251 (CSTC). Residues 237 to 251 (CGNCYLGDAFRCSTC) are fe-S binding site B.

The protein belongs to the anamorsin family. In terms of assembly, monomer. The cofactor is [2Fe-2S] cluster. [4Fe-4S] cluster serves as cofactor.

The protein localises to the cytoplasm. It localises to the mitochondrion intermembrane space. Functionally, component of the cytosolic iron-sulfur (Fe-S) protein assembly (CIA) machinery. Required for the maturation of extramitochondrial Fe-S proteins. Part of an electron transfer chain functioning in an early step of cytosolic Fe-S biogenesis, facilitating the de novo assembly of a [4Fe-4S] cluster on the cytosolic Fe-S scaffold complex. Electrons are transferred from NADPH via a FAD- and FMN-containing diflavin oxidoreductase. Together with the diflavin oxidoreductase, also required for the assembly of the diferric tyrosyl radical cofactor of ribonucleotide reductase (RNR), probably by providing electrons for reduction during radical cofactor maturation in the catalytic small subunit. The polypeptide is Anamorsin homolog (Schistosoma japonicum (Blood fluke)).